The primary structure comprises 544 residues: Chaperonin GroEL 1 (544 aa).

ATP-binding positions include 29 to 32 (TLGP), 86 to 90 (DGTTT), glycine 413, and aspartate 495.

Belongs to the chaperonin (HSP60) family. Forms a cylinder of 14 subunits composed of two heptameric rings stacked back-to-back. Interacts with the co-chaperonin GroES.

Its subcellular location is the cytoplasm. It carries out the reaction ATP + H2O + a folded polypeptide = ADP + phosphate + an unfolded polypeptide.. In terms of biological role, together with its co-chaperonin GroES, plays an essential role in assisting protein folding. The GroEL-GroES system forms a nano-cage that allows encapsulation of the non-native substrate proteins and provides a physical environment optimized to promote and accelerate protein folding. The protein is Chaperonin GroEL 1 of Synechococcus sp. (strain ATCC 27144 / PCC 6301 / SAUG 1402/1) (Anacystis nidulans).